We begin with the raw amino-acid sequence, 492 residues long: Fascin-2 (492 aa).

Belongs to the fascin family. Expressed in the inner ear. Abundant in the utricle.

The protein resides in the cytoplasm. It is found in the cytoskeleton. The protein localises to the cell projection. It localises to the stereocilium. Its function is as follows. Acts as an actin bundling protein. May play a pivotal role in photoreceptor cell-specific events, such as disk morphogenesis. Important for maintaining functional hair-cell bundles in the inner ear. May stiffen the longer stereocilia of hair-cell bundles in the inner ear enabling better force transmission to tip links. The sequence is that of Fascin-2 (Fscn2) from Mus musculus (Mouse).